Reading from the N-terminus, the 215-residue chain is Protein FAM167A (215 aa).

Disordered stretches follow at residues 1–26 (MSVPQIQVEEVSEKDRPAGAAVPPDD) and 63–109 (RPAA…LTTG). A coiled-coil region spans residues 124 to 157 (LRKELAEMRLQDQQLARQLMRLRGDINKLKIEQT).

It belongs to the FAM167 (SEC) family.

The protein is Protein FAM167A (Fam167a) of Mus musculus (Mouse).